Consider the following 382-residue polypeptide: 1-deoxy-D-xylulose 5-phosphate reductoisomerase (382 aa).

The NADPH site is built by threonine 10, glycine 11, serine 12, isoleucine 13, glycine 36, and asparagine 122. Residue lysine 123 participates in 1-deoxy-D-xylulose 5-phosphate binding. Residue glutamate 124 participates in NADPH binding. A Mn(2+)-binding site is contributed by aspartate 148. Serine 149, glutamate 150, serine 174, and histidine 197 together coordinate 1-deoxy-D-xylulose 5-phosphate. Residue glutamate 150 coordinates Mn(2+). An NADPH-binding site is contributed by glycine 203. Residues serine 210, asparagine 215, lysine 216, and glutamate 219 each coordinate 1-deoxy-D-xylulose 5-phosphate. Glutamate 219 provides a ligand contact to Mn(2+).

It belongs to the DXR family. Mg(2+) serves as cofactor. The cofactor is Mn(2+).

The catalysed reaction is 2-C-methyl-D-erythritol 4-phosphate + NADP(+) = 1-deoxy-D-xylulose 5-phosphate + NADPH + H(+). The protein operates within isoprenoid biosynthesis; isopentenyl diphosphate biosynthesis via DXP pathway; isopentenyl diphosphate from 1-deoxy-D-xylulose 5-phosphate: step 1/6. Its function is as follows. Catalyzes the NADPH-dependent rearrangement and reduction of 1-deoxy-D-xylulose-5-phosphate (DXP) to 2-C-methyl-D-erythritol 4-phosphate (MEP). The sequence is that of 1-deoxy-D-xylulose 5-phosphate reductoisomerase from Prosthecochloris aestuarii (strain DSM 271 / SK 413).